A 337-amino-acid chain; its full sequence is GTP 3',8-cyclase (337 aa).

The Radical SAM core domain maps to 17 to 243 (PFQRQYYYLR…HKSHTDGPAK (227 aa)). Arg-26 contributes to the GTP binding site. [4Fe-4S] cluster contacts are provided by Cys-33 and Cys-37. Residue Tyr-39 coordinates S-adenosyl-L-methionine. Position 40 (Cys-40) interacts with [4Fe-4S] cluster. Arg-76 lines the GTP pocket. Position 80 (Gly-80) interacts with S-adenosyl-L-methionine. Thr-107 lines the GTP pocket. Ser-131 is a binding site for S-adenosyl-L-methionine. Lys-168 is a GTP binding site. Met-202 serves as a coordination point for S-adenosyl-L-methionine. [4Fe-4S] cluster is bound by residues Cys-265 and Cys-268. 270-272 (RLR) is a GTP binding site. Cys-282 contacts [4Fe-4S] cluster.

The protein belongs to the radical SAM superfamily. MoaA family. As to quaternary structure, monomer and homodimer. Requires [4Fe-4S] cluster as cofactor.

The catalysed reaction is GTP + AH2 + S-adenosyl-L-methionine = (8S)-3',8-cyclo-7,8-dihydroguanosine 5'-triphosphate + 5'-deoxyadenosine + L-methionine + A + H(+). The protein operates within cofactor biosynthesis; molybdopterin biosynthesis. Its function is as follows. Catalyzes the cyclization of GTP to (8S)-3',8-cyclo-7,8-dihydroguanosine 5'-triphosphate. In Haemophilus influenzae (strain ATCC 51907 / DSM 11121 / KW20 / Rd), this protein is GTP 3',8-cyclase.